A 201-amino-acid polypeptide reads, in one-letter code: Large ribosomal subunit protein uL18 (201 aa).

The protein belongs to the universal ribosomal protein uL18 family. In terms of assembly, part of the 50S ribosomal subunit. Contacts the 5S and 23S rRNAs.

This is one of the proteins that bind and probably mediate the attachment of the 5S RNA into the large ribosomal subunit, where it forms part of the central protuberance. This is Large ribosomal subunit protein uL18 from Thermococcus gammatolerans (strain DSM 15229 / JCM 11827 / EJ3).